The primary structure comprises 363 residues: Adenosine kinase (363 aa).

Ala-185, Ile-188, and Ala-191 together coordinate Mg(2+). The active site involves Asp-318.

The protein belongs to the carbohydrate kinase PfkB family. Mg(2+) is required as a cofactor.

It catalyses the reaction adenosine + ATP = AMP + ADP + H(+). Its pathway is purine metabolism; AMP biosynthesis via salvage pathway; AMP from adenosine: step 1/1. Its function is as follows. ATP-dependent phosphorylation of adenosine and other related nucleoside analogs to monophosphate derivatives. It is a key purine metabolic enzyme in the opportunistic parasitic protozoan toxoplasma gondii as it cannot synthesize purines de novo. The protein is Adenosine kinase (AK) of Toxoplasma gondii.